Reading from the N-terminus, the 176-residue chain is Ribosome rescue factor SmrB (176 aa).

Positions 98-173 (LDLHGLTQMQ…GTAAILLLVE (76 aa)) constitute a Smr domain.

It belongs to the SmrB family. Associates with collided ribosomes, but not with correctly translating polysomes.

Acts as a ribosome collision sensor. Detects stalled/collided disomes (pairs of ribosomes where the leading ribosome is stalled and a second ribosome has collided with it) and endonucleolytically cleaves mRNA at the 5' boundary of the stalled ribosome. Stalled/collided disomes form a new interface (primarily via the 30S subunits) that binds SmrB. Cleaved mRNA becomes available for tmRNA ligation, leading to ribosomal subunit dissociation and rescue of stalled ribosomes. The protein is Ribosome rescue factor SmrB of Serratia proteamaculans (strain 568).